A 128-amino-acid chain; its full sequence is Small ribosomal subunit protein uS9 (128 aa).

Positions 107–128 are disordered; the sequence is RAVERKKPGRPKARKRFQFSKR. Positions 113 to 128 are enriched in basic residues; the sequence is KPGRPKARKRFQFSKR.

This sequence belongs to the universal ribosomal protein uS9 family.

This Parabacteroides distasonis (strain ATCC 8503 / DSM 20701 / CIP 104284 / JCM 5825 / NCTC 11152) protein is Small ribosomal subunit protein uS9.